The sequence spans 401 residues: Mannonate dehydratase (401 aa).

It belongs to the mannonate dehydratase family. Requires Fe(2+) as cofactor. Mn(2+) is required as a cofactor.

It carries out the reaction D-mannonate = 2-dehydro-3-deoxy-D-gluconate + H2O. It functions in the pathway carbohydrate metabolism; pentose and glucuronate interconversion. In terms of biological role, catalyzes the dehydration of D-mannonate. This chain is Mannonate dehydratase, found in Brucella melitensis biotype 2 (strain ATCC 23457).